The chain runs to 432 residues: Gamma-glutamyl phosphate reductase (432 aa).

Belongs to the gamma-glutamyl phosphate reductase family.

It is found in the cytoplasm. It carries out the reaction L-glutamate 5-semialdehyde + phosphate + NADP(+) = L-glutamyl 5-phosphate + NADPH + H(+). The protein operates within amino-acid biosynthesis; L-proline biosynthesis; L-glutamate 5-semialdehyde from L-glutamate: step 2/2. Catalyzes the NADPH-dependent reduction of L-glutamate 5-phosphate into L-glutamate 5-semialdehyde and phosphate. The product spontaneously undergoes cyclization to form 1-pyrroline-5-carboxylate. The sequence is that of Gamma-glutamyl phosphate reductase from Methylorubrum extorquens (strain CM4 / NCIMB 13688) (Methylobacterium extorquens).